The primary structure comprises 229 residues: 5'-methylthioadenosine/S-adenosylhomocysteine nucleosidase (229 aa).

E12 (proton acceptor) is an active-site residue. Residues G78, I152, and M173 to E174 contribute to the substrate site. Catalysis depends on D197, which acts as the Proton donor.

Belongs to the PNP/UDP phosphorylase family. MtnN subfamily.

It catalyses the reaction S-adenosyl-L-homocysteine + H2O = S-(5-deoxy-D-ribos-5-yl)-L-homocysteine + adenine. The catalysed reaction is S-methyl-5'-thioadenosine + H2O = 5-(methylsulfanyl)-D-ribose + adenine. The enzyme catalyses 5'-deoxyadenosine + H2O = 5-deoxy-D-ribose + adenine. The protein operates within amino-acid biosynthesis; L-methionine biosynthesis via salvage pathway; S-methyl-5-thio-alpha-D-ribose 1-phosphate from S-methyl-5'-thioadenosine (hydrolase route): step 1/2. Catalyzes the irreversible cleavage of the glycosidic bond in both 5'-methylthioadenosine (MTA) and S-adenosylhomocysteine (SAH/AdoHcy) to adenine and the corresponding thioribose, 5'-methylthioribose and S-ribosylhomocysteine, respectively. Also cleaves 5'-deoxyadenosine, a toxic by-product of radical S-adenosylmethionine (SAM) enzymes, into 5-deoxyribose and adenine. In Pasteurella multocida (strain Pm70), this protein is 5'-methylthioadenosine/S-adenosylhomocysteine nucleosidase.